A 79-amino-acid chain; its full sequence is RNA-binding protein KhpA (79 aa).

Positions 30-79 (GRVLEVRVHPDDLGKVIGRNGRTARALRTVVGAIGGRGVRVDLVDVDHVR) constitute a KH domain.

The protein belongs to the KhpA RNA-binding protein family.

The protein localises to the cytoplasm. The protein resides in the nucleoid. Its function is as follows. A probable RNA-binding protein. This is RNA-binding protein KhpA from Streptomyces coelicolor (strain ATCC BAA-471 / A3(2) / M145).